The chain runs to 337 residues: Dihydroorotate dehydrogenase (quinone) (337 aa).

FMN is bound by residues 62-66 (AGLDK) and Thr86. Lys66 contacts substrate. 111–115 (NRFGF) is a substrate binding site. Residues Asn139 and Asn172 each coordinate FMN. Asn172 is a substrate binding site. Ser175 functions as the Nucleophile in the catalytic mechanism. A substrate-binding site is contributed by Asn177. FMN is bound by residues Lys217 and Thr245. 246 to 247 (NT) serves as a coordination point for substrate. FMN contacts are provided by residues Gly268, Gly297, and 318-319 (YS).

It belongs to the dihydroorotate dehydrogenase family. Type 2 subfamily. In terms of assembly, monomer. Requires FMN as cofactor.

The protein localises to the cell membrane. The enzyme catalyses (S)-dihydroorotate + a quinone = orotate + a quinol. Its pathway is pyrimidine metabolism; UMP biosynthesis via de novo pathway; orotate from (S)-dihydroorotate (quinone route): step 1/1. Catalyzes the conversion of dihydroorotate to orotate with quinone as electron acceptor. This Methylobacillus flagellatus (strain ATCC 51484 / DSM 6875 / VKM B-1610 / KT) protein is Dihydroorotate dehydrogenase (quinone).